The sequence spans 156 residues: Small ribosomal subunit protein uS7 (156 aa).

This sequence belongs to the universal ribosomal protein uS7 family. In terms of assembly, part of the 30S ribosomal subunit. Contacts proteins S9 and S11.

Its function is as follows. One of the primary rRNA binding proteins, it binds directly to 16S rRNA where it nucleates assembly of the head domain of the 30S subunit. Is located at the subunit interface close to the decoding center, probably blocks exit of the E-site tRNA. This Wigglesworthia glossinidia brevipalpis protein is Small ribosomal subunit protein uS7.